Reading from the N-terminus, the 680-residue chain is Dipeptidyl carboxypeptidase (680 aa).

His469 serves as a coordination point for Zn(2+). The active site involves Glu470. The Zn(2+) site is built by His473 and His476.

This sequence belongs to the peptidase M3 family. It depends on Zn(2+) as a cofactor.

It is found in the cytoplasm. The enzyme catalyses Hydrolysis of unblocked, C-terminal dipeptides from oligopeptides, with broad specificity. Does not hydrolyze bonds in which P1' is Pro, or both P1 and P1' are Gly.. Removes dipeptides from the C-termini of N-blocked tripeptides, tetrapeptides and larger peptides. The protein is Dipeptidyl carboxypeptidase (dcp) of Salmonella typhimurium (strain LT2 / SGSC1412 / ATCC 700720).